Consider the following 193-residue polypeptide: Holliday junction branch migration complex subunit RuvA (193 aa).

Positions 1 to 63 (MYAYLKGKIM…EDAQLLYGFK (63 aa)) are domain I. The domain II stretch occupies residues 64–141 (DEEEKAMFNA…TITDESELFK (78 aa)). A flexible linker region spans residues 141 to 142 (KE). Positions 143 to 193 (VNDTLLNEALLAFEALGYSKREITKIEKELKKKQFSTVDEYVKQGLQMFVS) are domain III.

The protein belongs to the RuvA family. Homotetramer. Forms an RuvA(8)-RuvB(12)-Holliday junction (HJ) complex. HJ DNA is sandwiched between 2 RuvA tetramers; dsDNA enters through RuvA and exits via RuvB. An RuvB hexamer assembles on each DNA strand where it exits the tetramer. Each RuvB hexamer is contacted by two RuvA subunits (via domain III) on 2 adjacent RuvB subunits; this complex drives branch migration. In the full resolvosome a probable DNA-RuvA(4)-RuvB(12)-RuvC(2) complex forms which resolves the HJ.

It is found in the cytoplasm. The RuvA-RuvB-RuvC complex processes Holliday junction (HJ) DNA during genetic recombination and DNA repair, while the RuvA-RuvB complex plays an important role in the rescue of blocked DNA replication forks via replication fork reversal (RFR). RuvA specifically binds to HJ cruciform DNA, conferring on it an open structure. The RuvB hexamer acts as an ATP-dependent pump, pulling dsDNA into and through the RuvAB complex. HJ branch migration allows RuvC to scan DNA until it finds its consensus sequence, where it cleaves and resolves the cruciform DNA. The chain is Holliday junction branch migration complex subunit RuvA from Macrococcus caseolyticus (strain JCSC5402) (Macrococcoides caseolyticum).